Consider the following 545-residue polypeptide: Triacylglycerol lipase ptl1 (545 aa).

A PNPLA domain is found at 182–358 (LYFNGGTAFG…EVCTPKNFIW (177 aa)). Residues 213–217 (GCASG) carry the GXSXG motif.

It is found in the lipid droplet. The catalysed reaction is a triacylglycerol + H2O = a diacylglycerol + a fatty acid + H(+). Functionally, lipid particle-localized triacylglycerol (TAG) lipase. The lipid droplet/particle is a lipid storage compartment which serves as a depot of energy and building blocks for membrane lipid biosynthesis. Involved in the mobilization of the non-polar storage lipids triacylglycerols (TAGs) from lipid particles by hydrolysis of TAGs, releasing and supplying specific fatty acids to the appropriate metabolic pathways. This Schizosaccharomyces pombe (strain 972 / ATCC 24843) (Fission yeast) protein is Triacylglycerol lipase ptl1 (ptl1).